A 180-amino-acid chain; its full sequence is Transcriptional repressor NrdR (180 aa).

A zinc finger spans residues 3-34 (CPYCQNTSSRVLESRSTEAGQSIRRRRECLQC). The ATP-cone domain maps to 49–139 (ISVLKKDKSK…VYGEFKGITD (91 aa)). The disordered stretch occupies residues 148 to 180 (QQEERESSSSPEWSDAGEEATVIEDSSQVMASS). A compositionally biased stretch (polar residues) spans 171-180 (EDSSQVMASS).

The protein belongs to the NrdR family. Requires Zn(2+) as cofactor.

Functionally, negatively regulates transcription of bacterial ribonucleotide reductase nrd genes and operons by binding to NrdR-boxes. In Gloeothece citriformis (strain PCC 7424) (Cyanothece sp. (strain PCC 7424)), this protein is Transcriptional repressor NrdR.